The chain runs to 179 residues: Large ribosomal subunit protein uL6 (179 aa).

Positions 154–169 (EPYKGKGVKYEHEQIR) are enriched in basic and acidic residues. The interval 154 to 179 (EPYKGKGVKYEHEQIRRKAGKSGGKK) is disordered. Residues 170-179 (RKAGKSGGKK) show a composition bias toward basic residues.

The protein belongs to the universal ribosomal protein uL6 family. Part of the 50S ribosomal subunit.

In terms of biological role, this protein binds to the 23S rRNA, and is important in its secondary structure. It is located near the subunit interface in the base of the L7/L12 stalk, and near the tRNA binding site of the peptidyltransferase center. This is Large ribosomal subunit protein uL6 from Oleidesulfovibrio alaskensis (strain ATCC BAA-1058 / DSM 17464 / G20) (Desulfovibrio alaskensis).